Here is a 135-residue protein sequence, read N- to C-terminus: Large ribosomal subunit protein bL19 (135 aa).

This sequence belongs to the bacterial ribosomal protein bL19 family.

This protein is located at the 30S-50S ribosomal subunit interface and may play a role in the structure and function of the aminoacyl-tRNA binding site. This Xanthomonas oryzae pv. oryzae (strain KACC10331 / KXO85) protein is Large ribosomal subunit protein bL19.